The sequence spans 249 residues: Orotidine 5'-phosphate decarboxylase (249 aa).

Substrate contacts are provided by residues Asp21, Lys43, 72–81 (DLKLYDIPET), Thr128, Arg193, Gln204, Gly224, and Arg225. The active-site Proton donor is Lys74.

The protein belongs to the OMP decarboxylase family. Type 1 subfamily. As to quaternary structure, homodimer.

The enzyme catalyses orotidine 5'-phosphate + H(+) = UMP + CO2. It participates in pyrimidine metabolism; UMP biosynthesis via de novo pathway; UMP from orotate: step 2/2. Functionally, catalyzes the decarboxylation of orotidine 5'-monophosphate (OMP) to uridine 5'-monophosphate (UMP). The sequence is that of Orotidine 5'-phosphate decarboxylase from Desulfosudis oleivorans (strain DSM 6200 / JCM 39069 / Hxd3) (Desulfococcus oleovorans).